The primary structure comprises 182 residues: ATP synthase subunit delta (182 aa).

Belongs to the ATPase delta chain family. In terms of assembly, F-type ATPases have 2 components, F(1) - the catalytic core - and F(0) - the membrane proton channel. F(1) has five subunits: alpha(3), beta(3), gamma(1), delta(1), epsilon(1). CF(0) has four main subunits: a(1), b(1), b'(1) and c(10-14). The alpha and beta chains form an alternating ring which encloses part of the gamma chain. F(1) is attached to F(0) by a central stalk formed by the gamma and epsilon chains, while a peripheral stalk is formed by the delta, b and b' chains.

It localises to the cellular thylakoid membrane. In terms of biological role, f(1)F(0) ATP synthase produces ATP from ADP in the presence of a proton or sodium gradient. F-type ATPases consist of two structural domains, F(1) containing the extramembraneous catalytic core and F(0) containing the membrane proton channel, linked together by a central stalk and a peripheral stalk. During catalysis, ATP synthesis in the catalytic domain of F(1) is coupled via a rotary mechanism of the central stalk subunits to proton translocation. This protein is part of the stalk that links CF(0) to CF(1). It either transmits conformational changes from CF(0) to CF(1) or is implicated in proton conduction. This chain is ATP synthase subunit delta, found in Prochlorococcus marinus (strain NATL2A).